A 506-amino-acid polypeptide reads, in one-letter code: AAA-ATPase At4g25835 (506 aa).

A signal peptide spans 1–20 (MKEYWTSLASLLGVLAFCQS). 244 to 251 (GPPGTGKS) is an ATP binding site. Residues 462–506 (GKSRVQNVSLEEQENRAFDSLYAEENGGEEEEIEDNICKSSDDCS) are disordered. The segment covering 487–496 (NGGEEEEIED) has biased composition (acidic residues). Residues 497–506 (NICKSSDDCS) are compositionally biased toward basic and acidic residues.

The protein belongs to the AAA ATPase family. BCS1 subfamily. It depends on Mg(2+) as a cofactor.

It carries out the reaction ATP + H2O = ADP + phosphate + H(+). This chain is AAA-ATPase At4g25835, found in Arabidopsis thaliana (Mouse-ear cress).